Here is a 49-residue protein sequence, read N- to C-terminus: Multidrug efflux pump accessory protein AcrZ (49 aa).

The Periplasmic segment spans residues 1-7; it reads MLELLKS. The chain crosses the membrane as a helical span at residues 8–28; the sequence is LVFAVIMVPVVMAIILGLIYG. Residues 29-49 are Cytoplasmic-facing; it reads LGEVFNIFSGVGKKDQPGQNH.

The protein belongs to the AcrZ family. As to quaternary structure, part of the AcrA-AcrB-AcrZ-TolC efflux pump, interacts directly with AcrB.

Its subcellular location is the cell inner membrane. AcrA-AcrB-AcrZ-TolC is a drug efflux protein complex with a broad substrate specificity. This protein binds to AcrB and is required for efflux of some but not all substrates, suggesting it may influence the specificity of drug export. The sequence is that of Multidrug efflux pump accessory protein AcrZ from Escherichia coli O157:H7.